Reading from the N-terminus, the 918-residue chain is DNA mismatch repair protein MutS (918 aa).

662 to 669 (GPNMAGKS) is an ATP binding site.

Belongs to the DNA mismatch repair MutS family.

Its function is as follows. This protein is involved in the repair of mismatches in DNA. It is possible that it carries out the mismatch recognition step. This protein has a weak ATPase activity. The polypeptide is DNA mismatch repair protein MutS (Sorangium cellulosum (strain So ce56) (Polyangium cellulosum (strain So ce56))).